The following is a 255-amino-acid chain: Ribosomal RNA small subunit methyltransferase A (255 aa).

S-adenosyl-L-methionine contacts are provided by N11, L13, G38, E59, D83, and N101.

The protein belongs to the class I-like SAM-binding methyltransferase superfamily. rRNA adenine N(6)-methyltransferase family. RsmA subfamily.

The protein localises to the cytoplasm. It carries out the reaction adenosine(1518)/adenosine(1519) in 16S rRNA + 4 S-adenosyl-L-methionine = N(6)-dimethyladenosine(1518)/N(6)-dimethyladenosine(1519) in 16S rRNA + 4 S-adenosyl-L-homocysteine + 4 H(+). Specifically dimethylates two adjacent adenosines (A1518 and A1519) in the loop of a conserved hairpin near the 3'-end of 16S rRNA in the 30S particle. May play a critical role in biogenesis of 30S subunits. The protein is Ribosomal RNA small subunit methyltransferase A of Thiobacillus denitrificans (strain ATCC 25259 / T1).